The sequence spans 206 residues: uncharacterized protein (206 aa).

The chain crosses the membrane as a helical span at residues 166–186 (FYTGLSVIVGGATALALGLFF).

It is found in the membrane. This is an uncharacterized protein from Dictyostelium discoideum (Social amoeba).